A 299-amino-acid chain; its full sequence is S-methyl-5'-thioadenosine phosphorylase (299 aa).

Phosphate-binding positions include Ser14, 56–57, and 89–90; these read RH and SA. Met191 is a substrate binding site. Thr192 is a phosphate binding site. 215-217 contributes to the substrate binding site; it reads DYD.

This sequence belongs to the PNP/MTAP phosphorylase family. MTAP subfamily. In terms of assembly, homohexamer. Dimer of a homotrimer.

The catalysed reaction is S-methyl-5'-thioadenosine + phosphate = 5-(methylsulfanyl)-alpha-D-ribose 1-phosphate + adenine. It functions in the pathway amino-acid biosynthesis; L-methionine biosynthesis via salvage pathway; S-methyl-5-thio-alpha-D-ribose 1-phosphate from S-methyl-5'-thioadenosine (phosphorylase route): step 1/1. Its function is as follows. Catalyzes the reversible phosphorylation of S-methyl-5'-thioadenosine (MTA) to adenine and 5-methylthioribose-1-phosphate. Involved in the breakdown of MTA, a major by-product of polyamine biosynthesis. Responsible for the first step in the methionine salvage pathway after MTA has been generated from S-adenosylmethionine. Has broad substrate specificity with 6-aminopurine nucleosides as preferred substrates. The chain is S-methyl-5'-thioadenosine phosphorylase from Gloeobacter violaceus (strain ATCC 29082 / PCC 7421).